The chain runs to 127 residues: MSSITKEQVVEFIANMTVLELSEFIKELEEKFGVSAAAPAMAMVAAGPAEAAPAEEEKTEFDVILKAAGANKIGVIKVVRALTGLGLKEAKDKVDGAPSTLKEAVSKEEAEEAKKQLVEAGAEVEVK.

N6-methyllysine is present on residues lysine 77 and lysine 88.

It belongs to the bacterial ribosomal protein bL12 family. In terms of assembly, homodimer. Part of the ribosomal stalk of the 50S ribosomal subunit. Forms a multimeric L10(L12)X complex, where L10 forms an elongated spine to which 2 to 4 L12 dimers bind in a sequential fashion. Binds GTP-bound translation factors.

In terms of biological role, forms part of the ribosomal stalk which helps the ribosome interact with GTP-bound translation factors. Is thus essential for accurate translation. This is Large ribosomal subunit protein bL12 from Nitratidesulfovibrio vulgaris (strain DSM 19637 / Miyazaki F) (Desulfovibrio vulgaris).